Here is a 292-residue protein sequence, read N- to C-terminus: L-serine dehydratase, alpha chain (292 aa).

This sequence belongs to the iron-sulfur dependent L-serine dehydratase family. In terms of assembly, heterooctamer of four alpha chains and four beta chains. It depends on [4Fe-4S] cluster as a cofactor.

It catalyses the reaction L-serine = pyruvate + NH4(+). Its pathway is carbohydrate biosynthesis; gluconeogenesis. This is L-serine dehydratase, alpha chain (sdhA) from Peptoniphilus asaccharolyticus (Peptostreptococcus asaccharolyticus).